Reading from the N-terminus, the 712-residue chain is 3',5'-cyclic-AMP phosphodiesterase 4C (712 aa).

2 disordered regions span residues 1–31 and 45–64; these read MENL…APKH and RFYS…LSPR. Basic residues predominate over residues 17-31; it reads SRSRGRHSMTRAPKH. Residues 48 to 64 show a composition bias toward basic and acidic residues; it reads SDPDKSAGCRERDLSPR. Position 73 is a phosphoserine (Ser73). The segment at 181-200 is disordered; it reads AKQGPVGNPSSSNQLPPAED. In terms of domain architecture, PDEase spans 312–641; sequence VQTDQEEQLA…EWYQSKIPRS (330 aa). His388 (proton donor) is an active-site residue. His388 contributes to the 3',5'-cyclic AMP binding site. AMP contacts are provided by His388 and His392. Residues His392, His428, Asp429, and Asp546 each coordinate Zn(2+). Residues Asp429, Asp546, Gln597, and Phe600 each contribute to the AMP site. Position 429 (Asp429) interacts with Mg(2+). Asp429 serves as a coordination point for Mn(2+). Gln597 and Phe600 together coordinate 3',5'-cyclic AMP. Disordered stretches follow at residues 636–655 and 664–712; these read SKIP…GPDR and EAEE…NQRT. Phosphoserine is present on Ser641. Acidic residues predominate over residues 664–678; that stretch reads EAEEEDEEEEEEGEE.

Belongs to the cyclic nucleotide phosphodiesterase family. PDE4 subfamily. In terms of assembly, part of a complex containing AKAP5, ADCY5, ADCY6 and PKD2. The cofactor is Zn(2+). Mg(2+) is required as a cofactor. Requires Mn(2+) as cofactor. In terms of tissue distribution, expressed in various tissues but not in cells of the immune system.

It is found in the cell projection. The protein resides in the cilium. It catalyses the reaction 3',5'-cyclic AMP + H2O = AMP + H(+). It functions in the pathway purine metabolism; 3',5'-cyclic AMP degradation; AMP from 3',5'-cyclic AMP: step 1/1. With respect to regulation, inhibited by rolipram. Functionally, hydrolyzes the second messenger cAMP, which is a key regulator of many important physiological processes. The protein is 3',5'-cyclic-AMP phosphodiesterase 4C of Homo sapiens (Human).